The chain runs to 624 residues: MKGQETRGFQSEVKQLLHLMIHSLYSNKEIFLRELISNASDAADKLRFRALSNPDLYEGDGELRVRVSFDKDNRTLTIADNGIGMNRDEVIDHLGTIAKSGTKSFLESMGSDQAKDSQLIGQFGVGFYSAFIVADKVTVRTRAAGDSAENGVFWESHGEGEYTVDDITKADRGTEITLHLREGEDDFLNDWRVRSIISKYSDHIALPVEIEKREEQDGETVVSWEKINKAQALWTRNKSEIKDDEYNEFYKHIAHDFTDPLTWSHNRVEGKQEYTSLLYIPAQAPWDMWNRDHKHGLKLYVQRVFIMDDAEQFMPNYLRFTRGLIDSNDLPLNVSREILQDSTVTRNLRNALTKRTLQMLEKLAKDDAEKYQTFWKQFGLVLKEGPAEDSGNVESIAKLLRFASTHTDSSEQTVSLEDYVSRMKEGQEKIYYITADSYAAAKSSPHLELLRKKGIEVLLLSDRIDEWMMNYLTEFDGKAFQSVAKADESIDKLADEVDETAKEAEKALEPFVERVKTLLGDRVKEVRFTHRLTDTPAIVTTDADEMGTQMAKLFAAAGQAMPEVKYIFELNPDHPLVKRAADTQDEARFSEWVELLLDQSLLAERGTLEDPNQFIKRVNALLLG.

The a; substrate-binding stretch occupies residues 1-336 (MKGQETRGFQ…SNDLPLNVSR (336 aa)). The interval 337 to 552 (EILQDSTVTR…ADEMGTQMAK (216 aa)) is b. Residues 553–624 (LFAAAGQAMP…IKRVNALLLG (72 aa)) form a c region.

The protein belongs to the heat shock protein 90 family. Homodimer.

The protein resides in the cytoplasm. Its function is as follows. Molecular chaperone. Has ATPase activity. The polypeptide is Chaperone protein HtpG (Enterobacter sp. (strain 638)).